We begin with the raw amino-acid sequence, 342 residues long: Phosphate acyltransferase (342 aa).

The protein belongs to the PlsX family. In terms of assembly, homodimer. Probably interacts with PlsY.

Its subcellular location is the cytoplasm. The enzyme catalyses a fatty acyl-[ACP] + phosphate = an acyl phosphate + holo-[ACP]. Its pathway is lipid metabolism; phospholipid metabolism. Its function is as follows. Catalyzes the reversible formation of acyl-phosphate (acyl-PO(4)) from acyl-[acyl-carrier-protein] (acyl-ACP). This enzyme utilizes acyl-ACP as fatty acyl donor, but not acyl-CoA. The protein is Phosphate acyltransferase of Legionella pneumophila (strain Paris).